The chain runs to 3038 residues: Lovastatin nonaketide synthase, polyketide synthase component (3038 aa).

The Ketosynthase family 3 (KS3) domain occupies 8-447; the sequence is NEPIVVVGSG…GTNAHAIIEE (440 aa). Residues C181, H320, and H367 each act as for beta-ketoacyl synthase activity in the active site. The interval 562-889 is malonyl-CoA:ACP transacylase (MAT) domain; it reads IFTGQGAQWP…GKNDLDSFSR (328 aa). The active-site For malonyltransferase activity is S656. The tract at residues 695–757 is lovC-binding; the sequence is AMLAAGMSFE…DESTFARLLK (63 aa). Positions 953–1089 are N-terminal hotdog fold; it reads HLLLGKLSEY…GQLALTIEDV (137 aa). Positions 953-1263 are dehydratase (DH) domain; it reads HLLLGKLSEY…ENITFKPFSP (311 aa). Residues 953-1267 form the PKS/mFAS DH domain; that stretch reads HLLLGKLSEY…FKPFSPPDAS (315 aa). H985 serves as the catalytic Proton acceptor; for dehydratase activity. A C-terminal hotdog fold region spans residues 1107-1267; the sequence is EEHPHMNRVN…FKPFSPPDAS (161 aa). D1174 functions as the Proton donor; for dehydratase activity in the catalytic mechanism. The segment at 1443–1543 is methyltransferase (CMet) domain; it reads LEIGAGTGGA…ARSLLKPGGQ (101 aa). Residues 2139 to 2437 are ketoreductase (KR) domain; the sequence is TLPTRVRSID…KIPEYRGAKA (299 aa). Positions 2463 to 2538 constitute a Carrier domain; that stretch reads QIVIDGLSAK…DLANEAAARL (76 aa). O-(pantetheine 4'-phosphoryl)serine is present on S2498. The segment at 2546–2602 is disordered; it reads VAATDGGAESTDNTSENEVSGREDTDLSAAATITEPSSADEDDTEPGDEDVPRSHHP. The span at 2583–2594 shows a compositional bias: acidic residues; the sequence is SADEDDTEPGDE. The tract at residues 2602 to 2952 is inactive Condensation domain; that stretch reads PLSLGQEYSW…PTSNQPAPLF (351 aa).

Homodimer. Each MAT domain from the lovB homodimer binds one lovC molecule to form the final active lovB-lovC megasynthase complex. It depends on pantetheine 4'-phosphate as a cofactor.

It carries out the reaction holo-[lovastatin nonaketide synthase] + 9 malonyl-CoA + S-adenosyl-L-methionine + 11 NADPH + 19 H(+) = dihydromonacolin L-[lovastatin nonaketide synthase] + S-adenosyl-L-homocysteine + 9 CO2 + 11 NADP(+) + 9 CoA + 6 H2O. It functions in the pathway polyketide biosynthesis; lovastatin biosynthesis. Functionally, lovastatin nonaketide synthase; part of the gene cluster that mediates the biosynthesis of lovastatin (also known as mevinolin, mevacor or monacolin K), a hypolipidemic inhibitor of (3S)-hydroxymethylglutaryl-coenzyme A (HMG-CoA) reductase (HMGR). The first step in the biosynthesis of lovastatin is the production of dihydromonacolin L acid by the lovastatin nonaketide synthase lovB and the trans-acting enoyl reductase lovC (called the lovB-lovC megasynthase complex) via condensation of one acetyl-CoA unit and 8 malonyl-CoA units. The formation of the LovB/C complex is essential for the integrity of the catalytic chamber to the complete total synthesis of DML acid. Dihydromonacolin L acid is released from lovB by the thioesterase lovG. Next, dihydromonacolin L acid is oxidized by the dihydromonacolin L monooxygenase lovA twice to form monacolin J acid. The 2-methylbutyrate moiety of lovastatin is synthesized by the lovastatin diketide synthase lovF via condensation of one acetyl-CoA unit and one malonyl-CoA unit. Finally, the covalent attachment of this moiety to monacolin J acid is catalyzed by the transesterase lovD to yield lovastatin. LovD has broad substrate specificity and can also convert monacolin J to simvastatin using alpha-dimethylbutanoyl-S-methyl-3-mercaptopropionate (DMB-S-MMP) as the thioester acyl donor, and can also catalyze the reverse reaction and function as hydrolase in vitro. LovD has much higher activity with LovF-bound 2-methylbutanoate than with free diketide substrates. The polypeptide is Lovastatin nonaketide synthase, polyketide synthase component (Aspergillus terreus).